Consider the following 155-residue polypeptide: Histone H2B.5 (155 aa).

Composition is skewed to basic and acidic residues over residues 1–28 (MAPK…EKAP) and 36–54 (EKRL…GKKD). A disordered region spans residues 1–63 (MAPKAEKKPA…DRAGRKKAKK (63 aa)). An N6-acetyllysine mark is found at Lys-7 and Lys-37. Lys-151 is covalently cross-linked (Glycyl lysine isopeptide (Lys-Gly) (interchain with G-Cter in ubiquitin)).

This sequence belongs to the histone H2B family. The nucleosome is a histone octamer containing two molecules each of H2A, H2B, H3 and H4 assembled in one H3-H4 heterotetramer and two H2A-H2B heterodimers. The octamer wraps approximately 147 bp of DNA. Post-translationally, can be acetylated to form H2BK6ac and H2BK33ac. Monoubiquitinated by BRE1 to form H2BK143ub1 and deubiquitinated by UBP26. Required for heterochromatic histone H3 di- and trimethylation at H3K4me. May give a specific tag for epigenetic transcriptional activation.

The protein resides in the nucleus. The protein localises to the chromosome. In terms of biological role, core component of nucleosome. Nucleosomes wrap and compact DNA into chromatin, limiting DNA accessibility to the cellular machineries which require DNA as a template. Histones thereby play a central role in transcription regulation, DNA repair, DNA replication and chromosomal stability. DNA accessibility is regulated via a complex set of post-translational modifications of histones, also called histone code, and nucleosome remodeling. This is Histone H2B.5 (H2B.5) from Oryza sativa subsp. japonica (Rice).